The following is a 595-amino-acid chain: Probable serine/threonine-protein kinase fhkC (595 aa).

A disordered region spans residues 1–84; the sequence is MNSNKEETTA…MTEDNSKEED (84 aa). Over residues 18–31 the composition is skewed to low complexity; the sequence is EEQQQQQQPQQQEQ. Over residues 32–49 the composition is skewed to polar residues; it reads INTTTASTTSNGENTASD. The span at 50-70 shows a compositional bias: low complexity; the sequence is NNNNSNNNNNNNTNNTNTNNN. An FHA domain is found at 116 to 170; sequence IILGRSKGVCNYTFTSPTVSGKHCKIYRDPTVKSRNVAFVDDTSTNGTFINNEVI. The Protein kinase domain maps to 218-479; that stretch reads YDLREVLGTG…IDQALNHPWF (262 aa). ATP is bound by residues 224-232 and K247; that span reads LGTGNFASV. The active-site Proton acceptor is the D342. T377 is modified (phosphothreonine; by autocatalysis). Residues 494 to 595 are disordered; that stretch reads KLEFPPPSTN…DEHEQKKVKN (102 aa). A compositionally biased stretch (polar residues) spans 508 to 520; it reads PTPNTTSSNSQLV. The segment covering 530–567 has biased composition (low complexity); it reads DNTTDNNNNNNNNNNNNNNNNNNNTTNNSNNIDNNNGN. A compositionally biased stretch (basic and acidic residues) spans 585-595; that stretch reads NDEHEQKKVKN.

Belongs to the protein kinase superfamily. CAMK Ser/Thr protein kinase family. CHK2 subfamily.

The catalysed reaction is L-seryl-[protein] + ATP = O-phospho-L-seryl-[protein] + ADP + H(+). The enzyme catalyses L-threonyl-[protein] + ATP = O-phospho-L-threonyl-[protein] + ADP + H(+). This Dictyostelium discoideum (Social amoeba) protein is Probable serine/threonine-protein kinase fhkC (fhkC).